The primary structure comprises 251 residues: MKKTGYFLLAVIVIVAAAGVGYWKFSGNPDALREIVLEQCLPDQLQHQNPAPCAEVKPRAGYVVFKDRHGPLQYLLMPTYRINGTESPLLLEPATPNFFWLAWQARGYMSKKYGHDIPDSAVSLAINSRLGRSQDHLHIHISCIRPDVREQLDNDLTRISTRWLPLPGGLMGHEYLARRVTESELAQRSPFMMLAEEVPEARDHMGRYALAVVRQSDDSFVLLATERNLLTLNRASAEEIQDHSCAILSSR.

Residues 5-25 traverse the membrane as a helical segment; sequence GYFLLAVIVIVAAAGVGYWKF.

It belongs to the Cdh family.

The protein localises to the cell inner membrane. It catalyses the reaction a CDP-1,2-diacyl-sn-glycerol + H2O = a 1,2-diacyl-sn-glycero-3-phosphate + CMP + 2 H(+). The protein operates within phospholipid metabolism; CDP-diacylglycerol degradation; phosphatidate from CDP-diacylglycerol: step 1/1. This is CDP-diacylglycerol pyrophosphatase from Salmonella enteritidis PT4 (strain P125109).